The chain runs to 476 residues: MMAKWMSVAQVKEKIKESSAEEVTSRYLEVIKKSKINGYLTISDKALEQAKKIDKEGHEGPLAGVPIAIKDNISVVGLPNSCGSKILEGYVPPFNAHVIEKLLSAGAVILGKTNMDEFAMGSSTETSHFGPTANPWDLERVPGGSSGGSAAVVAAGEAPFALGSDTGGSVRCPASFCGVVGLKPTYGAVSRYGVVAYANSLEQVGPLANNVEDIAVLMDVIAGYDRRDSTSIDSKTEYQKALVDDVKGLKIGVPKEFFGEGIHPDVEKAVWDAIHKCESLGATWEEVSMPHIKYALASYYIIAMSEASSNLARFDGTRYGFRAGGENWHAMVSKTRAEGFGTEVKRRILLGTYALSAGYHDKYYLKALKVRTLVKQDFDKALSKVDLLMAPTMPNPAFKIGEKIEDPLTLYLSDINTCPINLAGVPSISVPCGFTDGLPIGLQIMGKPFDEETVLRAAYTFEKNTDYHTKRPPEVA.

Residues Lys-70 and Ser-145 each act as charge relay system in the active site. Ser-169 functions as the Acyl-ester intermediate in the catalytic mechanism.

It belongs to the amidase family. GatA subfamily. In terms of assembly, heterotrimer of A, B and C subunits.

The catalysed reaction is L-glutamyl-tRNA(Gln) + L-glutamine + ATP + H2O = L-glutaminyl-tRNA(Gln) + L-glutamate + ADP + phosphate + H(+). In terms of biological role, allows the formation of correctly charged Gln-tRNA(Gln) through the transamidation of misacylated Glu-tRNA(Gln) in organisms which lack glutaminyl-tRNA synthetase. The reaction takes place in the presence of glutamine and ATP through an activated gamma-phospho-Glu-tRNA(Gln). The chain is Glutamyl-tRNA(Gln) amidotransferase subunit A from Methanosarcina mazei (strain ATCC BAA-159 / DSM 3647 / Goe1 / Go1 / JCM 11833 / OCM 88) (Methanosarcina frisia).